We begin with the raw amino-acid sequence, 266 residues long: Gasdermin bGSDM (266 aa).

Cys3 is lipidated: S-palmitoyl cysteine. Transmembrane regions (beta stranded) follow at residues 69-85 (ISGQ…GLSI), 97-115 (KLGL…FEFQ), 163-180 (KFTI…ELTI), and 189-205 (GNVK…KICY).

The protein belongs to the bacterial gasdermin family. In terms of assembly, monomer. As to quaternary structure, forms large, homooligomeric ring-shaped pores when inserted in membranes. Post-translationally, palmitoylation helps stabilize the inactive state; may self palmitoylate. Palmitoylation plays a significant role in pore formation.

The protein resides in the cytoplasm. The protein localises to the cell inner membrane. Its activity is regulated as follows. The full-length protein before cleavage is inactive: intramolecular interactions between the N-terminal domain and the C-terminal region as well as the lipid modification, mediate autoinhibition. The pyroptosis-like-inducing activity is carried by the released N-terminal domain (Gasdermin bGSDM, N-terminus). Its function is as follows. Precursor of a pore-forming protein involved in defense against bacteriophages. Expression of bGSDM and the neighboring protease gene (Ga0182885_104520) is toxic in E.coli. Cleavage of this precursor by its dedicated protease releases the active moiety (gasdermin bGSDM, N-terminus) which inserts into membranes, forming pores and triggering cell death. Functionally, pore-forming protein that causes membrane permeabilization via a pyroptosis-like activity. Makes ring-like pores when released. In Desulfuromonadales bacterium, this protein is Gasdermin bGSDM.